Reading from the N-terminus, the 105-residue chain is MMGGNMNKMMKQVQKMQQDMAKMQEELGNRTVETTAGGGVVKVVASGKQEIISITIKPEAVDPDDVEMLQDLLITAVNDALRQSQEMVAKEMGKLTGGLNIPGLF.

The protein belongs to the YbaB/EbfC family. In terms of assembly, homodimer.

Its subcellular location is the cytoplasm. The protein resides in the nucleoid. Its function is as follows. Binds to DNA and alters its conformation. May be involved in regulation of gene expression, nucleoid organization and DNA protection. In Desulforamulus reducens (strain ATCC BAA-1160 / DSM 100696 / MI-1) (Desulfotomaculum reducens), this protein is Nucleoid-associated protein Dred_0043.